A 166-amino-acid chain; its full sequence is Ureidoglycolate lyase (166 aa).

Belongs to the ureidoglycolate lyase family. In terms of assembly, homodimer. Requires Ni(2+) as cofactor.

It catalyses the reaction (S)-ureidoglycolate = urea + glyoxylate. Its pathway is nitrogen metabolism; (S)-allantoin degradation. Catalyzes the catabolism of the allantoin degradation intermediate (S)-ureidoglycolate, generating urea and glyoxylate. Involved in the utilization of allantoin as nitrogen source. The polypeptide is Ureidoglycolate lyase (Rhizobium etli (strain ATCC 51251 / DSM 11541 / JCM 21823 / NBRC 15573 / CFN 42)).